Consider the following 138-residue polypeptide: Small ribosomal subunit protein uS11c (138 aa).

Residues 1-23 (MAKTIPRIGSRKNGRIGSRKNTR) are disordered. A compositionally biased stretch (basic residues) spans 9 to 23 (GSRKNGRIGSRKNTR).

This sequence belongs to the universal ribosomal protein uS11 family. In terms of assembly, part of the 30S ribosomal subunit.

Its subcellular location is the plastid. The protein resides in the chloroplast. This chain is Small ribosomal subunit protein uS11c, found in Daucus carota (Wild carrot).